The chain runs to 129 residues: Protein Turandot A (129 aa).

The first 21 residues, 1–21 (MNSLTGFMCCALLLISPLCMG), serve as a signal peptide directing secretion. Residue Asn-49 is glycosylated (N-linked (GlcNAc...) asparagine).

It belongs to the Turandot family.

The protein localises to the secreted. Its function is as follows. A humoral factor that plays a role in stress tolerance; gives increased resistance to the lethal effects of bacterial challenge and stress. Regulated by the JAK/STAT pathway and NF-KB-like Relish pathway in the fat body, upd3 in the hemocytes and Mekk1 in response to septic injury and consequent immune response. The sequence is that of Protein Turandot A (TotA) from Drosophila yakuba (Fruit fly).